The primary structure comprises 870 residues: DNA mismatch repair protein MutS (870 aa).

617-624 (GPNMAGKS) provides a ligand contact to ATP.

The protein belongs to the DNA mismatch repair MutS family.

In terms of biological role, this protein is involved in the repair of mismatches in DNA. It is possible that it carries out the mismatch recognition step. This protein has a weak ATPase activity. In Phocaeicola vulgatus (strain ATCC 8482 / DSM 1447 / JCM 5826 / CCUG 4940 / NBRC 14291 / NCTC 11154) (Bacteroides vulgatus), this protein is DNA mismatch repair protein MutS.